A 276-amino-acid polypeptide reads, in one-letter code: MTGFGQRLDAAVSARGPLCPGIDPHPELLNAWGLTVDAEGLRAFCDICVAAFAGFAIVKPQVAFFEAYGSAGFAVLEDTIAALRAEGVLVLADAKRGDIGSTMAAYAAAWAGDSPLAADAVTASPYLGFGSLRPLLDTAVANGRGVFVLAATSNPEGVGLQRAVAGDVTVAQSIVDAVAQANREADPAARDGDPVGPFGVVVGATVADPPDLHMLGGPVLVPGVGAQGGRPEALGGLGNARRLLPAVSREVLRAGPAVDDVRAAAERLRDQVAYLA.

The active-site Proton donor is Lys-95.

The protein belongs to the OMP decarboxylase family. Type 2 subfamily.

It carries out the reaction orotidine 5'-phosphate + H(+) = UMP + CO2. It participates in pyrimidine metabolism; UMP biosynthesis via de novo pathway; UMP from orotate: step 2/2. This Mycolicibacterium smegmatis (strain ATCC 700084 / mc(2)155) (Mycobacterium smegmatis) protein is Orotidine 5'-phosphate decarboxylase (pyrF).